A 678-amino-acid chain; its full sequence is Protein hook (678 aa).

The interval 1–155 (MSTQNGMYYS…NIMRALQELE (155 aa)) is interaction with microtubules. The region spanning 5–123 (NGMYYSLLEW…RLLQLVLGCA (119 aa)) is the Calponin-homology (CH) domain. 2 coiled-coil regions span residues 135–435 (EIMC…LKCG) and 479–589 (QTAL…AKEV).

It belongs to the hook family. In terms of assembly, homodimer. Interacts with microtubules via its N-terminus.

It is found in the cytoplasm. It localises to the cytoskeleton. The protein localises to the endosome. The protein resides in the synapse. Its function is as follows. Involved in endocytic trafficking by stabilizing organelles of the endocytic pathway. Probably acts as a cytoskeletal linker protein required to tether endosome vesicles to the cytoskeleton. Involved in modulation of endocytosis at stages required for down-regulation of membrane proteins that control synapse size. Not involved in synaptic vesicle recycling. Required in R7 cells for boss endocytosis into multivesicular bodies (MVBs). Has a role in regulating adult longevity. The chain is Protein hook from Drosophila virilis (Fruit fly).